The following is a 232-amino-acid chain: MAIDMLSTFIKPMHREGKKFVAIFAGVTLLLFLIWEPLGWIGVLLTVWCYYFFRDPVRITPTREGLIVSPADGVVSLIEPAVPPAELGMGPEPMTRVSVFMSVFDCHVNRAPIGGTVTAVAYRPGKFLNASLDKASVDNERNALAIRLADGRQIAVVQIAGLVARRILCDVKEGTPLLTGERFGMIRFGSRLDVYLPEGVEPLVSIGQVMTSGETVLADLTSTEARRSGAAR.

Ser-190 functions as the Schiff-base intermediate with substrate; via pyruvic acid in the catalytic mechanism. A Pyruvic acid (Ser); by autocatalysis modification is found at Ser-190.

The protein belongs to the phosphatidylserine decarboxylase family. PSD-A subfamily. In terms of assembly, heterodimer of a large membrane-associated beta subunit and a small pyruvoyl-containing alpha subunit. It depends on pyruvate as a cofactor. In terms of processing, is synthesized initially as an inactive proenzyme. Formation of the active enzyme involves a self-maturation process in which the active site pyruvoyl group is generated from an internal serine residue via an autocatalytic post-translational modification. Two non-identical subunits are generated from the proenzyme in this reaction, and the pyruvate is formed at the N-terminus of the alpha chain, which is derived from the carboxyl end of the proenzyme. The post-translation cleavage follows an unusual pathway, termed non-hydrolytic serinolysis, in which the side chain hydroxyl group of the serine supplies its oxygen atom to form the C-terminus of the beta chain, while the remainder of the serine residue undergoes an oxidative deamination to produce ammonia and the pyruvoyl prosthetic group on the alpha chain.

The protein resides in the cell membrane. The catalysed reaction is a 1,2-diacyl-sn-glycero-3-phospho-L-serine + H(+) = a 1,2-diacyl-sn-glycero-3-phosphoethanolamine + CO2. It functions in the pathway phospholipid metabolism; phosphatidylethanolamine biosynthesis; phosphatidylethanolamine from CDP-diacylglycerol: step 2/2. Its function is as follows. Catalyzes the formation of phosphatidylethanolamine (PtdEtn) from phosphatidylserine (PtdSer). The chain is Phosphatidylserine decarboxylase proenzyme from Cereibacter sphaeroides (strain ATCC 17025 / ATH 2.4.3) (Rhodobacter sphaeroides).